Reading from the N-terminus, the 185-residue chain is MKSGEKDYSVKEAMIFSQRIAQLSKALWKCVEKDWQQWIKPYDLNINEHHILTIAYHLKGASISEIAKFGVMHVSTAFNFSKKLEERGYLVFSKKEDDKRNTYIEITDKGEELLLRLMEEYDPENNSVFNGALALRNFYGKFPENIELIAILRNIYGQDFIDIFEKSLEDIEENFTESDQKLVKK.

The region spanning 13-157 is the HTH marR-type domain; the sequence is AMIFSQRIAQ…LIAILRNIYG (145 aa). A DNA-binding region (H-T-H motif) is located at residues 63 to 86; that stretch reads ISEIAKFGVMHVSTAFNFSKKLEE.

As to quaternary structure, homodimer.

Functionally, negative regulator of protease production and sporulation. The protein is HTH-type transcriptional regulator Hpr of Bacillus cereus (strain G9842).